The following is an 853-amino-acid chain: DNA mismatch repair protein MutS (853 aa).

613-620 (GPNMGGKS) is an ATP binding site.

The protein belongs to the DNA mismatch repair MutS family.

In terms of biological role, this protein is involved in the repair of mismatches in DNA. It is possible that it carries out the mismatch recognition step. This protein has a weak ATPase activity. In Vibrio vulnificus (strain YJ016), this protein is DNA mismatch repair protein MutS.